Reading from the N-terminus, the 524-residue chain is Cytochrome P450 monooxygenase drtD (524 aa).

A helical transmembrane segment spans residues 2–22 (SDTYLVAASGLAVCFFVLYLL). Cys-418 lines the heme pocket.

The protein belongs to the cytochrome P450 family. Heme is required as a cofactor.

Its subcellular location is the membrane. It functions in the pathway secondary metabolite biosynthesis; terpenoid biosynthesis. In terms of biological role, cytochrome P450 monooxygenase; part of the gene cluster that mediates the biosynthesis of various drimane-type sesquiterpene esters, compounds that exhibit diverse biological activities and are widely present in eukaryotes. The pathway begins with the synthesis of the backbone drimenol by the terpene cyclase drtB using farnesyl pyrophosphate (FPP) as substrate. The cytochrome P450 monooxygenase drtD is then responsible for the hydroxylations at C-6, C-9 and C-12, as well as the oxidation of hydroxyl groups at C-6 and C-11 to a ketone and an aldehyde, respectively. Then, the biosynthesis can go in two directions, either the hydroxylated drimenol is further hydroxylated at C-2 and C-3 by an enzyme(s) not associated with the drt cluster, or the FAD-binding oxidoreductase drtC further oxidizes C-11 or C-12 to form the butyrolactone ring. DrtB, drtD and drtC are solely responsible for the formation of the different drimane structures observed during drimane sesquiterpenes biosynthesis. The polyketide synthase drtA synthesizes different lengths (C6 and C8) of PKS chains, which are then oxidized to varying degrees by the short-chain dehydrogenase drtF. Finally, these PKS chains are transferred onto drimane sesquiterpenes by the acyltransferase drtE, forming the sesquiterpene esters. In addition to the different fatty acyl-CoA chains produced by drtA, drtE is also able to use cinnamoyl-CoA as a substrate. The polypeptide is Cytochrome P450 monooxygenase drtD (Aspergillus calidoustus).